The chain runs to 27 residues: IPQDLSGKMLTFPKEEDDDDVKLMTPK.

The segment at 1–27 (IPQDLSGKMLTFPKEEDDDDVKLMTPK) is disordered. The 22-residue stretch at 6 to 27 (SGKMLTFPKEEDDDDVKLMTPK) folds into the Pentraxin (PTX) domain.

Belongs to the pentraxin family. As to quaternary structure, homopentamer. Pentraxin (or pentaxin) have a discoid arrangement of 5 non-covalently bound subunits. Exists as a dimer under reducing conditions. It depends on Ca(2+) as a cofactor. Post-translationally, glycosylated.

It localises to the secreted. Its function is as follows. Displays several functions associated with host defense: it promotes agglutination, bacterial capsular swelling, phagocytosis, and complement fixation through its calcium-dependent binding to phosphorylcholine. The protein is C-reactive protein P1 of Gadus morhua (Atlantic cod).